The chain runs to 34 residues: Photosystem II reaction center protein Psb30 (34 aa).

A helical transmembrane segment spans residues 5 to 25 (VLAQLTVLAFVIAVGPITLIW).

This sequence belongs to the Psb30/Ycf12 family. As to quaternary structure, PSII is composed of 1 copy each of membrane proteins PsbA, PsbB, PsbC, PsbD, PsbE, PsbF, PsbH, PsbI, PsbJ, PsbK, PsbL, PsbM, PsbT, PsbX, PsbY, PsbZ, Psb30/Ycf12, peripheral proteins of the oxygen-evolving complex and a large number of cofactors. It forms dimeric complexes.

It localises to the plastid. The protein localises to the chloroplast thylakoid membrane. Its function is as follows. A core subunit of photosystem II (PSII), probably helps stabilize the reaction center. The protein is Photosystem II reaction center protein Psb30 of Cyanidioschyzon merolae (strain NIES-3377 / 10D) (Unicellular red alga).